The chain runs to 638 residues: DNA mismatch repair protein MutL (638 aa).

Positions 398–435 (GREGTSFGTQTNAFGSMATPRDNSRGSYSAGESRQRTE) are disordered.

It belongs to the DNA mismatch repair MutL/HexB family.

Functionally, this protein is involved in the repair of mismatches in DNA. It is required for dam-dependent methyl-directed DNA mismatch repair. May act as a 'molecular matchmaker', a protein that promotes the formation of a stable complex between two or more DNA-binding proteins in an ATP-dependent manner without itself being part of a final effector complex. This chain is DNA mismatch repair protein MutL, found in Shewanella baltica (strain OS155 / ATCC BAA-1091).